The following is a 504-amino-acid chain: ATP synthase subunit alpha (504 aa).

172–179 (GDRQTGKT) contacts ATP.

The protein belongs to the ATPase alpha/beta chains family. F-type ATPases have 2 components, CF(1) - the catalytic core - and CF(0) - the membrane proton channel. CF(1) has five subunits: alpha(3), beta(3), gamma(1), delta(1), epsilon(1). CF(0) has three main subunits: a(1), b(2) and c(9-12). The alpha and beta chains form an alternating ring which encloses part of the gamma chain. CF(1) is attached to CF(0) by a central stalk formed by the gamma and epsilon chains, while a peripheral stalk is formed by the delta and b chains.

Its subcellular location is the cell inner membrane. The catalysed reaction is ATP + H2O + 4 H(+)(in) = ADP + phosphate + 5 H(+)(out). Produces ATP from ADP in the presence of a proton gradient across the membrane. The alpha chain is a regulatory subunit. This chain is ATP synthase subunit alpha, found in Petrotoga mobilis (strain DSM 10674 / SJ95).